The sequence spans 134 residues: Glycine cleavage system H protein (134 aa).

Positions 24–106 constitute a Lipoyl-binding domain; sequence TVRVGITDYA…YGAGWLLDIQ (83 aa). K65 carries the N6-lipoyllysine modification.

The protein belongs to the GcvH family. In terms of assembly, the glycine cleavage system is composed of four proteins: P, T, L and H. The cofactor is (R)-lipoate.

Its function is as follows. The glycine cleavage system catalyzes the degradation of glycine. The H protein shuttles the methylamine group of glycine from the P protein to the T protein. The protein is Glycine cleavage system H protein of Mycobacterium tuberculosis (strain ATCC 25177 / H37Ra).